Reading from the N-terminus, the 60-residue chain is Cytotoxin 2 (60 aa).

4 disulfide bridges follow: cysteine 3–cysteine 21, cysteine 14–cysteine 38, cysteine 42–cysteine 53, and cysteine 54–cysteine 59.

Belongs to the three-finger toxin family. Short-chain subfamily. Type IA cytotoxin sub-subfamily. In terms of assembly, monomer in solution; Homodimer and oligomer in the presence of negatively charged lipids forming a pore with a size ranging between 20 and 30 Angstroms. In terms of tissue distribution, expressed by the venom gland.

It localises to the secreted. The protein localises to the target cell membrane. Functionally, shows cytolytic activity on many different cells by forming pore in lipid membranes. In vivo, increases heart rate or kills the animal by cardiac arrest. In addition, it binds to heparin with high affinity, interacts with Kv channel-interacting protein 1 (KCNIP1) in a calcium-independent manner, and binds to integrin alpha-V/beta-3 (ITGAV/ITGB3) with moderate affinity. The chain is Cytotoxin 2 from Naja annulifera (Banded Egyptian cobra).